The sequence spans 378 residues: Zinc transporter 7 (378 aa).

The Cytoplasmic portion of the chain corresponds to 1-37 (MLPLSIKDDEYKPPRLNLFRKMSGWFRSILADKTSRN). The chain crosses the membrane as a helical span at residues 38-58 (LFFFLCLNLSFAFVELLYGVW). Topologically, residues 59-67 (SNSLGLISD) are lumenal. Residues 68–88 (SFHMFFDCTALLAGLAASVIS) form a helical membrane-spanning segment. Over 89 to 102 (KWRSNDAFSYGYVR) the chain is Cytoplasmic. Residues 103-123 (AEVLAGFVNGLFLIFTAFFIF) form a helical membrane-spanning segment. The Lumenal segment spans residues 124 to 140 (SEGVERALEPPDVHHER). The helical transmembrane segment at 141-161 (LLPVSILGFIVNLIGIFVFQH) threads the bilayer. The interval 161–223 (HGGHGHSHGS…HGQDYCHDDH (63 aa)) is his-rich loop. Topologically, residues 162-238 (GGHGHSHGSG…TGSSKQILQG (77 aa)) are cytoplasmic. Positions 185–214 (HGHSHRGHGHSHEHKHGHTHDHGHSHGLSH) are disordered. Basic residues predominate over residues 186-211 (GHSHRGHGHSHEHKHGHTHDHGHSHG). A helical transmembrane segment spans residues 239–259 (VFLHIVADTLGSIGVIISAIL). Residues 260-264 (MQNYG) lie on the Lumenal side of the membrane. Residues 265-285 (LMIADPICSMLIALLIGVSIV) traverse the membrane as a helical segment. Topologically, residues 286–378 (PLLKESIGIL…LYIQIDVAAM (93 aa)) are cytoplasmic.

This sequence belongs to the cation diffusion facilitator (CDF) transporter (TC 2.A.4) family. SLC30A subfamily. Homooligomer.

It is found in the golgi apparatus membrane. Its subcellular location is the cytoplasmic vesicle. The protein localises to the golgi apparatus. The protein resides in the trans-Golgi network. It localises to the sarcoplasmic reticulum. It is found in the mitochondrion. The catalysed reaction is Zn(2+)(in) = Zn(2+)(out). Its function is as follows. Zinc ion transporter mediating zinc entry from the cytosol into the lumen of organelles along the secretory pathway. By contributing to zinc ion homeostasis within the early secretory pathway, regulates the activation and folding of enzymes like alkaline phosphatases. The sequence is that of Zinc transporter 7 (SLC30A7) from Gallus gallus (Chicken).